Reading from the N-terminus, the 1392-residue chain is DNA-directed RNA polymerase subunit beta'' (1392 aa).

4 residues coordinate Zn(2+): cysteine 224, cysteine 295, cysteine 302, and cysteine 305.

It belongs to the RNA polymerase beta' chain family. RpoC2 subfamily. As to quaternary structure, in plastids the minimal PEP RNA polymerase catalytic core is composed of four subunits: alpha, beta, beta', and beta''. When a (nuclear-encoded) sigma factor is associated with the core the holoenzyme is formed, which can initiate transcription. Zn(2+) is required as a cofactor.

The protein localises to the plastid. Its subcellular location is the chloroplast. The enzyme catalyses RNA(n) + a ribonucleoside 5'-triphosphate = RNA(n+1) + diphosphate. In terms of biological role, DNA-dependent RNA polymerase catalyzes the transcription of DNA into RNA using the four ribonucleoside triphosphates as substrates. The polypeptide is DNA-directed RNA polymerase subunit beta'' (Solanum bulbocastanum (Wild potato)).